The primary structure comprises 165 residues: MVVAVYPGTFDPLTRGHEDLVRRASSIFDTLVVGVADSRAKKPFFSLEERLKIANEVLGHYPNVKVMGFKGLLKDFVRTNNARVIVRGLRAVSDFEYEFQMAGMNRYLLPDVETMFMTPSDQYQFISGTIVREIAQLGGDVSKFVFPSVEKWLTEKVAAMGGPAA.

Position 9 (Thr9) interacts with substrate. ATP is bound by residues 9 to 10 (TF) and His17. Substrate-binding residues include Lys41, Leu73, and Arg87. ATP is bound by residues 88–90 (GLR), Glu98, and 123–129 (YQFISGT).

Belongs to the bacterial CoaD family. Homohexamer. Requires Mg(2+) as cofactor.

Its subcellular location is the cytoplasm. The catalysed reaction is (R)-4'-phosphopantetheine + ATP + H(+) = 3'-dephospho-CoA + diphosphate. Its pathway is cofactor biosynthesis; coenzyme A biosynthesis; CoA from (R)-pantothenate: step 4/5. Reversibly transfers an adenylyl group from ATP to 4'-phosphopantetheine, yielding dephospho-CoA (dPCoA) and pyrophosphate. This chain is Phosphopantetheine adenylyltransferase, found in Burkholderia vietnamiensis (strain G4 / LMG 22486) (Burkholderia cepacia (strain R1808)).